Reading from the N-terminus, the 355-residue chain is DnaJ homolog dnj-20 (355 aa).

Residues 1–21 (MRILNVSLLVLASSLVAFVEC) form the signal peptide. Residues 24–89 (DFYKILGVAK…EKRAMYDRHG (66 aa)) enclose the J domain.

The sequence is that of DnaJ homolog dnj-20 from Caenorhabditis elegans.